The primary structure comprises 227 residues: Enolase-phosphatase E1 (227 aa).

This sequence belongs to the HAD-like hydrolase superfamily. MasA/MtnC family. In terms of assembly, monomer. Mg(2+) serves as cofactor.

The enzyme catalyses 5-methylsulfanyl-2,3-dioxopentyl phosphate + H2O = 1,2-dihydroxy-5-(methylsulfanyl)pent-1-en-3-one + phosphate. The protein operates within amino-acid biosynthesis; L-methionine biosynthesis via salvage pathway; L-methionine from S-methyl-5-thio-alpha-D-ribose 1-phosphate: step 3/6. It functions in the pathway amino-acid biosynthesis; L-methionine biosynthesis via salvage pathway; L-methionine from S-methyl-5-thio-alpha-D-ribose 1-phosphate: step 4/6. Bifunctional enzyme that catalyzes the enolization of 2,3-diketo-5-methylthiopentyl-1-phosphate (DK-MTP-1-P) into the intermediate 2-hydroxy-3-keto-5-methylthiopentenyl-1-phosphate (HK-MTPenyl-1-P), which is then dephosphorylated to form the acireductone 1,2-dihydroxy-3-keto-5-methylthiopentene (DHK-MTPene). The protein is Enolase-phosphatase E1 of Methylococcus capsulatus (strain ATCC 33009 / NCIMB 11132 / Bath).